The primary structure comprises 248 residues: Ubiquinone biosynthesis O-methyltransferase (248 aa).

Residues Arg41, Gly72, Asp93, and Met136 each coordinate S-adenosyl-L-methionine.

It belongs to the methyltransferase superfamily. UbiG/COQ3 family.

The catalysed reaction is a 3-demethylubiquinol + S-adenosyl-L-methionine = a ubiquinol + S-adenosyl-L-homocysteine + H(+). It catalyses the reaction a 3-(all-trans-polyprenyl)benzene-1,2-diol + S-adenosyl-L-methionine = a 2-methoxy-6-(all-trans-polyprenyl)phenol + S-adenosyl-L-homocysteine + H(+). It functions in the pathway cofactor biosynthesis; ubiquinone biosynthesis. Its function is as follows. O-methyltransferase that catalyzes the 2 O-methylation steps in the ubiquinone biosynthetic pathway. This Rhizobium etli (strain CIAT 652) protein is Ubiquinone biosynthesis O-methyltransferase.